The sequence spans 345 residues: MAMIPSISKLLFVAICLFVYMGLSFGDFSIVGYSQNDLTSTERLIQLFESWMLKHNKIYKNIDEKIYRFEIFKDNLKYIDETNKKNNSYWLGLNVFADMSNDEFKEKYTGSIAGNYTTTELSYEEVLNDGDVNIPEYVDWRQKGAVTPVKNQGSCGSCWAFSAVVTIEGIIKIRTGNLNEYSEQELLDCDRRSYGCNGGYPWSALQLVAQYGIHYRNTYPYEGVQRYCRSREKGPYAAKTDGVRQVQPYNEGALLYSIANQPVSVVLEAAGKDFQLYRGGIFVGPCGNKVDHAVAAVGYGPNYILIKNSWGTGWGENGYIRIKRGTGNSYGVCGLYTSSFYPVKN.

The signal sequence occupies residues 1 to 18; the sequence is MAMIPSISKLLFVAICLF. Residues 19–133 constitute a propeptide, activation peptide; that stretch reads VYMGLSFGDF…EEVLNDGDVN (115 aa). 3 disulfides stabilise this stretch: Cys-155/Cys-196, Cys-189/Cys-228, and Cys-286/Cys-333. The active site involves Cys-158. Cys-158 is a binding site for E64. Cys-158 is a binding site for leupeptin. Active-site residues include His-292 and Asn-308.

The protein belongs to the peptidase C1 family.

It catalyses the reaction Hydrolysis of proteins with broad specificity for peptide bonds, but preference for an amino acid bearing a large hydrophobic side chain at the P2 position. Does not accept Val in P1'.. With respect to regulation, repressed by the active-site-directed cysteine protease inhibitor E64 (L-trans-epoxysuccinyl-leucylamide-(4-guanido)-butane) produced by Aspergillus japonicus. Inhibited by the inhibitor of cysteine proteases from Trypanosoma brucei (TbICP, rhodesain) and Colocasia esculenta cv. Kaohsiung no. 1 (CeCPI, tarocystatin). Repressed by leupeptin, a peptidic cysteine, serine and threonine protease inhibitor. Cysteine proteinase with a high level of diversity in substrate specificity, an amino acid bearing a large hydrophobic side chain at the P2 position is preferred. This is Papain from Carica papaya (Papaya).